A 285-amino-acid chain; its full sequence is Polyamine aminopropyltransferase (285 aa).

Residues 2–237 (EFWFSELHSP…GYWLFGFASK (236 aa)) enclose the PABS domain. S-methyl-5'-thioadenosine is bound at residue Q31. Residue D86 coordinates spermidine. Residues E106 and 137-138 (DA) contribute to the S-methyl-5'-thioadenosine site. D155 functions as the Proton acceptor in the catalytic mechanism.

This sequence belongs to the spermidine/spermine synthase family. As to quaternary structure, homodimer or homotetramer.

It localises to the cytoplasm. The enzyme catalyses S-adenosyl 3-(methylsulfanyl)propylamine + putrescine = S-methyl-5'-thioadenosine + spermidine + H(+). The protein operates within amine and polyamine biosynthesis; spermidine biosynthesis; spermidine from putrescine: step 1/1. Functionally, catalyzes the irreversible transfer of a propylamine group from the amino donor S-adenosylmethioninamine (decarboxy-AdoMet) to putrescine (1,4-diaminobutane) to yield spermidine. This is Polyamine aminopropyltransferase from Lachnospira eligens (strain ATCC 27750 / DSM 3376 / VPI C15-48 / C15-B4) (Eubacterium eligens).